A 142-amino-acid chain; its full sequence is Large ribosomal subunit protein uL11 (142 aa).

The protein belongs to the universal ribosomal protein uL11 family. As to quaternary structure, part of the ribosomal stalk of the 50S ribosomal subunit. Interacts with L10 and the large rRNA to form the base of the stalk. L10 forms an elongated spine to which L12 dimers bind in a sequential fashion forming a multimeric L10(L12)X complex. In terms of processing, one or more lysine residues are methylated.

In terms of biological role, forms part of the ribosomal stalk which helps the ribosome interact with GTP-bound translation factors. This is Large ribosomal subunit protein uL11 from Shewanella sp. (strain ANA-3).